We begin with the raw amino-acid sequence, 344 residues long: L-rhamnose-proton symporter (344 aa).

A run of 10 helical transmembrane segments spans residues 4–24, 38–58, 68–88, 101–121, 137–157, 175–195, 214–234, 259–279, 290–310, and 323–343; these read AITM…CFYA, WSVG…ALLL, FSLS…IGNI, MGIG…TPII, TLLG…AGQL, LVLA…MNAA, LPSY…FCFI, VLLS…YAWG, ISWM…GLVL, and VLSL…MGMA.

The protein belongs to the L-rhamnose transporter (TC 2.A.7.6) family.

The protein localises to the cell inner membrane. The catalysed reaction is L-rhamnopyranose(in) + H(+)(in) = L-rhamnopyranose(out) + H(+)(out). Its function is as follows. Uptake of L-rhamnose across the cytoplasmic membrane with the concomitant transport of protons into the cell (symport system). The sequence is that of L-rhamnose-proton symporter from Escherichia coli O157:H7.